The chain runs to 82 residues: Putative membrane protein insertion efficiency factor (82 aa).

It belongs to the UPF0161 family.

It localises to the cell inner membrane. Its function is as follows. Could be involved in insertion of integral membrane proteins into the membrane. The polypeptide is Putative membrane protein insertion efficiency factor (Thermus thermophilus (strain ATCC BAA-163 / DSM 7039 / HB27)).